Here is a 450-residue protein sequence, read N- to C-terminus: Phosphoglucosamine mutase (450 aa).

Serine 101 functions as the Phosphoserine intermediate in the catalytic mechanism. Mg(2+)-binding residues include serine 101, aspartate 240, aspartate 242, and aspartate 244. Phosphoserine is present on serine 101.

This sequence belongs to the phosphohexose mutase family. Mg(2+) is required as a cofactor. Activated by phosphorylation.

The catalysed reaction is alpha-D-glucosamine 1-phosphate = D-glucosamine 6-phosphate. In terms of biological role, catalyzes the conversion of glucosamine-6-phosphate to glucosamine-1-phosphate. This Streptococcus thermophilus (strain ATCC BAA-250 / LMG 18311) protein is Phosphoglucosamine mutase.